A 262-amino-acid polypeptide reads, in one-letter code: Ribose-5-phosphate isomerase A (262 aa).

Substrate is bound by residues 33-36 (TGST), 89-92 (DGAD), and 102-105 (KGGG). Residue Glu-111 is the Proton acceptor of the active site. Residue Lys-129 coordinates substrate.

The protein belongs to the ribose 5-phosphate isomerase family. As to quaternary structure, homodimer.

It carries out the reaction aldehydo-D-ribose 5-phosphate = D-ribulose 5-phosphate. It participates in carbohydrate degradation; pentose phosphate pathway; D-ribose 5-phosphate from D-ribulose 5-phosphate (non-oxidative stage): step 1/1. Functionally, catalyzes the reversible conversion of ribose-5-phosphate to ribulose 5-phosphate. This is Ribose-5-phosphate isomerase A from Roseobacter denitrificans (strain ATCC 33942 / OCh 114) (Erythrobacter sp. (strain OCh 114)).